Here is a 338-residue protein sequence, read N- to C-terminus: MKAPFTSLAGFRAVFETLPQVDAEAVEAATARNETLTKPKGALGRLEDLAIWYAGWIGDGRPALERPQVAIFAGNHGIAARGVSAFPPEVTVQMVANYRAGGAAVNQLCHVAGASMTVTELELDRPTLDFTVSPAMTEDELVAALAAGWEAVDDESDLLVVGEMGIGNTTAAAAIAAALFGGTAAEWTGRGSGVAGSALEAKTRVVAEGLERHGDALSDPLEVLRCLGGREIAAMAGAIARARVGRTPVILDGFICTSAAAVLHALTPSALDHAIAGHVSAEGAHPAALARIGKEPLLDLGMRLGEGTGAIVAINILRSAVACLSGMATFAEAGVSGG.

The active-site Proton acceptor is the Glu-306.

Belongs to the CobT family.

The catalysed reaction is 5,6-dimethylbenzimidazole + nicotinate beta-D-ribonucleotide = alpha-ribazole 5'-phosphate + nicotinate + H(+). It participates in nucleoside biosynthesis; alpha-ribazole biosynthesis; alpha-ribazole from 5,6-dimethylbenzimidazole: step 1/2. Catalyzes the synthesis of alpha-ribazole-5'-phosphate from nicotinate mononucleotide (NAMN) and 5,6-dimethylbenzimidazole (DMB). This chain is Nicotinate-nucleotide--dimethylbenzimidazole phosphoribosyltransferase, found in Cereibacter sphaeroides (strain KD131 / KCTC 12085) (Rhodobacter sphaeroides).